The sequence spans 345 residues: 4-hydroxy-2-oxovalerate aldolase (345 aa).

The 253-residue stretch at 8 to 260 folds into the Pyruvate carboxyltransferase domain; it reads ITVHDMTLRD…ETGVDVFKIQ (253 aa). 16–17 is a binding site for substrate; it reads RD. Aspartate 17 is a binding site for Mn(2+). Histidine 20 functions as the Proton acceptor in the catalytic mechanism. Substrate contacts are provided by serine 170 and histidine 199. Histidine 199 and histidine 201 together coordinate Mn(2+). Tyrosine 290 serves as a coordination point for substrate.

It belongs to the 4-hydroxy-2-oxovalerate aldolase family.

The catalysed reaction is (S)-4-hydroxy-2-oxopentanoate = acetaldehyde + pyruvate. The sequence is that of 4-hydroxy-2-oxovalerate aldolase from Leptothrix cholodnii (strain ATCC 51168 / LMG 8142 / SP-6) (Leptothrix discophora (strain SP-6)).